The following is a 164-amino-acid chain: Glutaredoxin-2, mitochondrial (164 aa).

The N-terminal 19 residues, 1–19 (MIWRRAALAGTRLVWSRSG), are a transit peptide targeting the mitochondrion. At S20 the chain carries Phosphoserine. The Glutaredoxin domain maps to 57 to 157 (VNQIQETISD…PLVHQCYLKK (101 aa)). C68 lines the [2Fe-2S] cluster pocket. K74 serves as a coordination point for glutathione. At C77 the chain carries S-glutathionyl cysteine; alternate. C77 and C80 are oxidised to a cystine. The glutathione site is built by Q109 and V121. C153 is a [2Fe-2S] cluster binding site.

The protein belongs to the glutaredoxin family. In terms of assembly, monomer; active form. Homodimer; inactive form. The homodimer is probably linked by 1 2Fe-2S cluster. In terms of tissue distribution, widely expressed. Expressed in brain, heart, skeletal muscle, colon, thymus, spleen, kidney, liver, small intestine, placenta and lung. Not expressed in peripheral blood leukocytes.

The protein localises to the mitochondrion. Its subcellular location is the nucleus. The 2Fe-2S present in the homodimer leads to inactivation of the enzyme. The 2Fe-2S may serve as a redox sensor: the presence of one-electron oxidants or reductants leading to the loss of the 2Fe-2S cluster, subsequent monomerization and activation of the enzyme. Unlike other glutaredoxins, it is not inhibited by oxidation of structural Cys residues. In terms of biological role, glutathione-dependent oxidoreductase that facilitates the maintenance of mitochondrial redox homeostasis upon induction of apoptosis by oxidative stress. Involved in response to hydrogen peroxide and regulation of apoptosis caused by oxidative stress. Acts as a very efficient catalyst of monothiol reactions because of its high affinity for protein glutathione-mixed disulfides. Can receive electrons not only from glutathione (GSH), but also from thioredoxin reductase supporting both monothiol and dithiol reactions. Efficiently catalyzes both glutathionylation and deglutathionylation of mitochondrial complex I, which in turn regulates the superoxide production by the complex. Overexpression decreases the susceptibility to apoptosis and prevents loss of cardiolipin and cytochrome c release. The protein is Glutaredoxin-2, mitochondrial (GLRX2) of Homo sapiens (Human).